Reading from the N-terminus, the 333-residue chain is MLERLWYAKSGWRWLLAPFALLFAIISGTRRYAYRHGWRKGYRSSLPVIVVGNISVGGNGKTPVVVWLVEQLQARGYRPGVVSRGYGGKAPHYPYRLDAASTTAQAGDEPVLIARRCGCPVVVAPKRADAVRLLEQSGEVDIIITDDGLQHYALARDIELVVVDGARRFGNACLLPMGPLREPVTRLKRVDAIICNGGEPGRGEYPMRLVADVPRRVRDEAPLAAPLSGPVDALAGIGHPPRFFATLEGLGYQLDQRVAYGDHHPFDRDELVGRFAGKPLLMTEKDAVKCRSFALDNWWYLPVSAELPASLLDTLLHKLGAGGKGQGATQAQG.

Residue 55-62 (SVGGNGKT) participates in ATP binding.

The protein belongs to the LpxK family.

It catalyses the reaction a lipid A disaccharide + ATP = a lipid IVA + ADP + H(+). The protein operates within glycolipid biosynthesis; lipid IV(A) biosynthesis; lipid IV(A) from (3R)-3-hydroxytetradecanoyl-[acyl-carrier-protein] and UDP-N-acetyl-alpha-D-glucosamine: step 6/6. Its function is as follows. Transfers the gamma-phosphate of ATP to the 4'-position of a tetraacyldisaccharide 1-phosphate intermediate (termed DS-1-P) to form tetraacyldisaccharide 1,4'-bis-phosphate (lipid IVA). This chain is Tetraacyldisaccharide 4'-kinase, found in Aeromonas hydrophila subsp. hydrophila (strain ATCC 7966 / DSM 30187 / BCRC 13018 / CCUG 14551 / JCM 1027 / KCTC 2358 / NCIMB 9240 / NCTC 8049).